The following is a 557-amino-acid chain: Thermosome subunit 2 (557 aa).

Positions 527–557 (DLSTGGDDDEEGGAPGGMGGMGGMGGMGGAM) are disordered. Residues 539–557 (GAPGGMGGMGGMGGMGGAM) show a composition bias toward gly residues.

Belongs to the TCP-1 chaperonin family. As to quaternary structure, the thermosome or CCT complex is a oligomeric complex of two octameric double-ring structures; the complex is probably a heterooligomer of CCT1, CCT2 and CCT3 with yet unknown stoichiometry.

Molecular chaperone that assists in the folding or refolding of nascent or denatured proteins along with ATP hydrolysis. ATPase activity is highest in thermosome assemblies containing CCT1:CCT2, followed by assemblies containing CCT1:CCT2:CCT3. Seems to contribute to thermosome ATPase activity. Not required for growth. The chain is Thermosome subunit 2 (cct2) from Haloferax volcanii (strain ATCC 29605 / DSM 3757 / JCM 8879 / NBRC 14742 / NCIMB 2012 / VKM B-1768 / DS2) (Halobacterium volcanii).